The chain runs to 273 residues: Large ribosomal subunit protein uL2 (273 aa).

The disordered stretch occupies residues 221–262 (RGTAMNPVDHPHGGGEGRNFGKHPVTPWGVQTKGKKTRHNKR). Residues 253–262 (KGKKTRHNKR) show a composition bias toward basic residues.

The protein belongs to the universal ribosomal protein uL2 family. As to quaternary structure, part of the 50S ribosomal subunit. Forms a bridge to the 30S subunit in the 70S ribosome.

Functionally, one of the primary rRNA binding proteins. Required for association of the 30S and 50S subunits to form the 70S ribosome, for tRNA binding and peptide bond formation. It has been suggested to have peptidyltransferase activity; this is somewhat controversial. Makes several contacts with the 16S rRNA in the 70S ribosome. The protein is Large ribosomal subunit protein uL2 of Aggregatibacter actinomycetemcomitans (Actinobacillus actinomycetemcomitans).